The following is a 60-amino-acid chain: Cecropin-B1 (60 aa).

The N-terminal stretch at 1-24 (MNFSKVFALVLLIGLVLLTGHTEA) is a signal peptide.

The protein belongs to the cecropin family.

The protein resides in the secreted. In terms of biological role, putative antimicrobial peptide. Partially neutralizes lipopolysaccharides (LPS). Exhibits anti-inflammatory properties: inhibits LPS-induced iNOS/NOS2 transcription, nitric oxide (NO) and pro-inflammatory cytokine production in mouse macrophages and human peripheral blood mononuclear cells (PBMCs); inhibits LPS-induced activation of MAPK and NF-kappa-B signaling pathways in mouse macrophages. This Aedes aegypti (Yellowfever mosquito) protein is Cecropin-B1.